Consider the following 918-residue polypeptide: Pre-pro-metalloprotease PrtV (918 aa).

Residues 1–23 form the signal peptide; the sequence is MKTIKKTLLAAAIASFFSSGLYA. Residues 24-105 constitute a propeptide that is removed on maturation; sequence QTPIDLGVVN…QKGPHKARVF (82 aa). Zn(2+) is bound at residue His-330. Glu-331 is an active-site residue. His-334 lines the Zn(2+) pocket. Ca(2+)-binding residues include Ile-757, Asp-782, Asp-821, and Asp-825. 2 PKD domains span residues 758–835 and 855–918; these read APVA…TIKV and VTMW…KVKL. The propeptide occupies 835 to 918; that stretch reads VDTPNALPQA…VTTITIKVKL (84 aa).

Belongs to the peptidase M6 family. The cofactor is Zn(2+). PrtV is expressed as an inactive, multidomain, 102 kDa pre-pro-metalloprotease. To form a catalytically active protease, PrtV is first secreted, and then it undergoes N- and C-terminal cleavages during envelope translocation to yield a 81 kDa pro-metalloprotease. Outside the cell, the 81 kDa pro-metalloprotease undergoes an auto-cleavage. The two major products of autoproteolysis (37 kDa and 18 kDa) together form the so called 55 kDa active complex.

The protein localises to the secreted. Calcium plays an important structural role, providing stability to this protein in the cytoplasm. Outside the cell, the decrease of the calcium concentration triggers the autoproteolysis. PrtV activity is increased by 25 mM of Sr(2+) or Mg(2+) and to some extent by Ba(2+); however, Ba(2+) inhibits PrtV at higher concentrations. Completely inhibited by EDTA and 1,10-phenanthroline. Metalloprotease that exhibits a cytotoxic effect leading to cell death. In host tissues, it could play a role in pathogenesis by modulating the stability of the extracellular matrix components such as fibronectin and fibrinogen. Also able to cleave plasminogen. The chain is Pre-pro-metalloprotease PrtV from Vibrio cholerae serotype O1 (strain ATCC 39315 / El Tor Inaba N16961).